The sequence spans 648 residues: MTNFEPKKLKKNWTIEDSISTYEIDKWGDKYFSINSKGNISVTKDINSEKKIDLFKLVRELKSREINTPLIIRFNDILKDRINALHDAFLKAIKTYKYKNIYQGVFPVKCNQQKNVLEKIIEFGSPWNFGLEVGSKSELLIGLALLENQNSLLICNGYKDKKYIEIATLARKLGKNPIIVIEQKDEVNRIIEAVQDLNASPLIGIRAKLSSKSSGRWSKSVGDNSKFGLSIPEIMSTIKELKEANLINEMRLLHFHIGSQISDIAVIKDALQEASQIYVELFKLGAPMKYIDVGGGLGIDFDGTKTSSNTSTNYSLQNYANDVIATIKDSCELNNIEHPTIISESGRAIISHCSVLIFNVLGTSHVSSKLKIYDDKKQSLIISNLIETFYELKKLKNKKINLSQIIELWNDAKKFKEDCLVAFRLGFLSLAERAYAEELTWACAKEIANNLNNDEINHPDLFEITETLASTYYANLSIFKSIPDCWAINQIFPIMPIHRHLEEPFCKGNFADLTCDSDGKLNSFINNGKIKSLLNLHEPEQDKDYLIGIFMTGAYQEALGNLHNLFGNTNVVHIDINQNDSYKVKNIIKEDSKSEILQLLDYSSASLVESIRINTEAAIDQKKLTIEEARKLIDQIEISLRKSSYLSE.

K109 is modified (N6-(pyridoxal phosphate)lysine). Substrate is bound at residue 291–301 (IDVGGGLGIDF).

This sequence belongs to the Orn/Lys/Arg decarboxylase class-II family. SpeA subfamily. Mg(2+) is required as a cofactor. Pyridoxal 5'-phosphate serves as cofactor.

The catalysed reaction is L-arginine + H(+) = agmatine + CO2. The protein operates within amine and polyamine biosynthesis; agmatine biosynthesis; agmatine from L-arginine: step 1/1. In terms of biological role, catalyzes the biosynthesis of agmatine from arginine. This Prochlorococcus marinus (strain MIT 9215) protein is Biosynthetic arginine decarboxylase.